Consider the following 198-residue polypeptide: Putative 3-methyladenine DNA glycosylase (198 aa).

This sequence belongs to the DNA glycosylase MPG family.

This chain is Putative 3-methyladenine DNA glycosylase, found in Natranaerobius thermophilus (strain ATCC BAA-1301 / DSM 18059 / JW/NM-WN-LF).